An 89-amino-acid chain; its full sequence is Small ribosomal subunit protein uS15 (89 aa).

It belongs to the universal ribosomal protein uS15 family. Part of the 30S ribosomal subunit. Forms a bridge to the 50S subunit in the 70S ribosome, contacting the 23S rRNA.

One of the primary rRNA binding proteins, it binds directly to 16S rRNA where it helps nucleate assembly of the platform of the 30S subunit by binding and bridging several RNA helices of the 16S rRNA. In terms of biological role, forms an intersubunit bridge (bridge B4) with the 23S rRNA of the 50S subunit in the ribosome. The protein is Small ribosomal subunit protein uS15 of Listeria innocua serovar 6a (strain ATCC BAA-680 / CLIP 11262).